Here is a 160-residue protein sequence, read N- to C-terminus: Protein max (160 aa).

Over residues 1 to 13 the composition is skewed to acidic residues; the sequence is MSDNDDIEVESDE. The disordered stretch occupies residues 1–40; sequence MSDNDDIEVESDEEQPRFQSAADKRAHHNALERKRRDHIK. N-acetylserine is present on Ser-2. Ser-2 and Ser-11 each carry phosphoserine. Positions 23 to 74 constitute a bHLH domain; it reads DKRAHHNALERKRRDHIKDSFHSLRDSVPSLQGEKASRAQILDKATEYIQYM. A compositionally biased stretch (basic and acidic residues) spans 29–40; sequence NALERKRRDHIK. Lys-66 bears the N6-acetyllysine mark. The leucine-zipper stretch occupies residues 81 to 102; that stretch reads HQQDIDDLKRQNALLEQQVRAL. Residues 105–160 form a disordered region; it reads ARSSAQLQTNYPSSDNSLYTNAKGGTISAFDGGSDSSSESEPEEPQNRKKLRMEAS. At Ser-107 the chain carries Phosphoserine. The segment covering 107–124 has biased composition (polar residues); sequence SSAQLQTNYPSSDNSLYT. N6-acetyllysine is present on residues Lys-153 and Lys-154.

It belongs to the MAX family. As to quaternary structure, efficient DNA binding requires dimerization with another bHLH protein. Binds DNA as a heterodimer with MYC or MAD. Part of the E2F6.com-1 complex in G0 phase composed of E2F6, MGA, MAX, TFDP1, CBX3, BAT8, EUHMTASE1, RING1, RNF2, MBLR, L3MBTL2 and YAF2. Component of some MLL1/MLL complex, at least composed of the core components KMT2A/MLL1, ASH2L, HCFC1/HCF1, WDR5 and RBBP5, as well as the facultative components BACC1, CHD8, E2F6, HSP70, INO80C, KANSL1, LAS1L, MAX, MCRS1, MGA, MYST1/MOF, PELP1, PHF20, PRP31, RING2, RUVB1/TIP49A, RUVB2/TIP49B, SENP3, TAF1, TAF4, TAF6, TAF7, TAF9 and TEX10. Interacts with SPAG9. The heterodimer MYC:MAX interacts with ABI1; the interaction may enhance MYC:MAX transcriptional activity. Post-translationally, phosphorylated.

It is found in the nucleus. The protein resides in the cell projection. The protein localises to the dendrite. In terms of biological role, transcription regulator. Forms a sequence-specific DNA-binding protein complex with MYC or MAD which recognizes the core sequence 5'-CAC[GA]TG-3'. The MYC:MAX complex is a transcriptional activator, whereas the MAD:MAX complex is a repressor. May repress transcription via the recruitment of a chromatin remodeling complex containing H3 'Lys-9' histone methyltransferase activity. Represses MYC transcriptional activity from E-box elements. This is Protein max from Rattus norvegicus (Rat).